A 462-amino-acid polypeptide reads, in one-letter code: ESX-1 secretion system protein EccE1 (462 aa).

2 helical membrane passes run 9–29 (FSTG…IAFL) and 34–54 (WWAG…TFYG).

It belongs to the EccE family. As to quaternary structure, part of the ESX-1 / type VII secretion system (T7SS), which is composed of cytosolic and membrane components. The ESX-1 membrane complex is composed of EccB1, EccCa1, EccCb1, EccD1 and EccE1.

It localises to the cell inner membrane. In terms of biological role, part of the ESX-1 specialized secretion system, which delivers several virulence factors to host cells during infection, including the key virulence factors EsxA (ESAT-6) and EsxB (CFP-10). The chain is ESX-1 secretion system protein EccE1 from Mycobacterium tuberculosis (strain CDC 1551 / Oshkosh).